A 374-amino-acid polypeptide reads, in one-letter code: Histidine biosynthesis bifunctional protein HisB (374 aa).

The tract at residues 1–183 (MKKKVLFIDR…RVAEFLFAGE (183 aa)) is histidinol-phosphatase. Asp-9 functions as the Nucleophile in the catalytic mechanism. Asp-9, Asp-11, and Asp-131 together coordinate Mg(2+). Asp-11 acts as the Proton donor in catalysis. The interval 184–374 (RRAEIRRTTK…FELPSSKGVL (191 aa)) is imidazoleglycerol-phosphate dehydratase.

This sequence in the N-terminal section; belongs to the histidinol-phosphatase family. The protein in the C-terminal section; belongs to the imidazoleglycerol-phosphate dehydratase family. The cofactor is Mg(2+).

Its subcellular location is the cytoplasm. The enzyme catalyses D-erythro-1-(imidazol-4-yl)glycerol 3-phosphate = 3-(imidazol-4-yl)-2-oxopropyl phosphate + H2O. It carries out the reaction L-histidinol phosphate + H2O = L-histidinol + phosphate. Its pathway is amino-acid biosynthesis; L-histidine biosynthesis; L-histidine from 5-phospho-alpha-D-ribose 1-diphosphate: step 6/9. The protein operates within amino-acid biosynthesis; L-histidine biosynthesis; L-histidine from 5-phospho-alpha-D-ribose 1-diphosphate: step 8/9. This chain is Histidine biosynthesis bifunctional protein HisB, found in Bacteroides fragilis (strain ATCC 25285 / DSM 2151 / CCUG 4856 / JCM 11019 / LMG 10263 / NCTC 9343 / Onslow / VPI 2553 / EN-2).